The sequence spans 145 residues: D-aminoacyl-tRNA deacylase (145 aa).

A Gly-cisPro motif, important for rejection of L-amino acids motif is present at residues 137 to 138 (GP).

It belongs to the DTD family. In terms of assembly, homodimer.

The protein localises to the cytoplasm. It carries out the reaction glycyl-tRNA(Ala) + H2O = tRNA(Ala) + glycine + H(+). The enzyme catalyses a D-aminoacyl-tRNA + H2O = a tRNA + a D-alpha-amino acid + H(+). In terms of biological role, an aminoacyl-tRNA editing enzyme that deacylates mischarged D-aminoacyl-tRNAs. Also deacylates mischarged glycyl-tRNA(Ala), protecting cells against glycine mischarging by AlaRS. Acts via tRNA-based rather than protein-based catalysis; rejects L-amino acids rather than detecting D-amino acids in the active site. By recycling D-aminoacyl-tRNA to D-amino acids and free tRNA molecules, this enzyme counteracts the toxicity associated with the formation of D-aminoacyl-tRNA entities in vivo and helps enforce protein L-homochirality. This Pseudomonas syringae pv. tomato (strain ATCC BAA-871 / DC3000) protein is D-aminoacyl-tRNA deacylase.